A 95-amino-acid chain; its full sequence is Secretoglobin family 2A member 2 (95 aa).

The N-terminal stretch at methionine 1–alanine 18 is a signal peptide. A glycan (N-linked (GlcNAc...) asparagine) is linked at asparagine 35.

Belongs to the secretoglobin family. Lipophilin subfamily. As to quaternary structure, prostatein is composed of three different peptides called C1, C2 and C3. These form covalent C1:C3 (F) and C2:C3 (S) heterodimers whose non-covalent association forms tetrameric (C1:C3/C3:C2) prostatein molecules. As to expression, highly expressed in ventral prostate.

The protein localises to the secreted. Functionally, part of prostatein which is the major secretory glycoprotein of ventral prostate gland. Steroid-binding protein; can bind non-polar steroids, cholesterol and a group of small proline-rich peptides. The sequence is that of Secretoglobin family 2A member 2 (Scgb2a2) from Rattus norvegicus (Rat).